Here is an 828-residue protein sequence, read N- to C-terminus: MKLSRRSFMKANAVAAAAAAAGLSVPGVARAVVGQQEAIKWDKAPCRFCGTGCGVLVGTQQGRVVACQGDPDAPVNRGLNCIKGYFLPKIMYGKDRLTQPLLRMKNGKYDKEGEFTPITWDQAFDVMEEKFKTALKEKGPESIGMFGSGQWTIWEGYAASKLFKAGFRSNNIDPNARHCMASAVVGFMRTFGMDEPMGCYDDIEQADAFVLWGANMAEMHPILWSRITNRRLSNQDVTVAVLSTYQHRSFELADNGIIFTPQSDLVILNYIANYIIQNNAINQDFFSKHVNLRKGATDIGYGLRPTHPLEKAAKNPGSDASEPMSFEDYKAFVAEYTLEKTAEMTGVPKDQLEQLAQLYADPNKKVISYWTMGFNQHTRGVWANNLVYNLHLLTGKISQPGCGPFSLTGQPSACGTAREVGTFAHRLPADMVVTNEKHRDICEKKWNIPSGTIPAKIGLHAVAQDRALKDGKLNVYWTMCTNNMQAGPNINEERMPGWRDPRNFIIVSDPYPTVSALAADLILPTAMWVEKEGAYGNAERRTQFWRQQVQAPGEAKSDLWQLVQFSRRFKTEEVWPEELLAKKPELRGKTLYEVLYATPEVSKFPVSELAEDQLNDESRELGFYLQKGLFEEYAWFGRGHGHDLAPFDDYHKARGLRWPVVNGKETQWRYSEGNDPYVKAGEGYKFYGKPDGKAVIFALPFEPAAEAPDEEYDLWLSTGRVLEHWHTGSMTRRVPELHRAFPEAVLFIHPLDAKARDLRRGDKVKVVSRRGEVISIVETRGRNRPPQGLVYMPFFDAAQLVNKLTLDATDPLSKETDFKKCAVKLEKV.

Positions 1 to 31 form a signal peptide, tat-type signal; that stretch reads MKLSRRSFMKANAVAAAAAAAGLSVPGVARA. One can recognise a 4Fe-4S Mo/W bis-MGD-type domain in the interval 39–95; sequence IKWDKAPCRFCGTGCGVLVGTQQGRVVACQGDPDAPVNRGLNCIKGYFLPKIMYGKD. Positions 46, 49, 53, and 81 each coordinate [4Fe-4S] cluster. Mo-bis(molybdopterin guanine dinucleotide) contacts are provided by residues lysine 83, glutamine 150, asparagine 175, cysteine 179, 212 to 219, 243 to 247, 262 to 264, methionine 372, glutamine 376, asparagine 482, 508 to 509, lysine 531, aspartate 558, and 718 to 727; these read WGANMAEM, STYQH, QSD, SD, and TGRVLEHWHT. A substrate-binding site is contributed by phenylalanine 794. The Mo-bis(molybdopterin guanine dinucleotide) site is built by asparagine 802 and lysine 819.

The protein belongs to the prokaryotic molybdopterin-containing oxidoreductase family. NasA/NapA/NarB subfamily. As to quaternary structure, component of the periplasmic nitrate reductase NapAB complex composed of NapA and NapB. The cofactor is [4Fe-4S] cluster. It depends on Mo-bis(molybdopterin guanine dinucleotide) as a cofactor. Predicted to be exported by the Tat system. The position of the signal peptide cleavage has not been experimentally proven.

The protein localises to the periplasm. The enzyme catalyses 2 Fe(II)-[cytochrome] + nitrate + 2 H(+) = 2 Fe(III)-[cytochrome] + nitrite + H2O. Functionally, catalytic subunit of the periplasmic nitrate reductase complex NapAB. Receives electrons from NapB and catalyzes the reduction of nitrate to nitrite. The protein is Periplasmic nitrate reductase of Escherichia coli O157:H7 (strain EC4115 / EHEC).